Consider the following 242-residue polypeptide: Uridylate kinase (242 aa).

11-14 (KLSG) lines the ATP pocket. Residues 19–24 (GEKGAG) form an involved in allosteric activation by GTP region. Gly-53 serves as a coordination point for UMP. The ATP site is built by Gly-54 and Arg-58. UMP is bound by residues Asp-73 and 134 to 141 (IGSPYFST). Residues Asn-162, Tyr-168, and Asp-171 each contribute to the ATP site.

It belongs to the UMP kinase family. In terms of assembly, homohexamer.

It localises to the cytoplasm. The enzyme catalyses UMP + ATP = UDP + ADP. The protein operates within pyrimidine metabolism; CTP biosynthesis via de novo pathway; UDP from UMP (UMPK route): step 1/1. Allosterically activated by GTP. Inhibited by UTP. In terms of biological role, catalyzes the reversible phosphorylation of UMP to UDP. This Streptococcus pyogenes serotype M2 (strain MGAS10270) protein is Uridylate kinase.